Reading from the N-terminus, the 1639-residue chain is Peroxide stress-activated histidine kinase mak1 (1639 aa).

Residues 38–49 (SFTNSQNSSVGS) are compositionally biased toward polar residues. The tract at residues 38–76 (SFTNSQNSSVGSVHSPILESPTSLNRQHRNSFSFNNVSS) is disordered. A compositionally biased stretch (low complexity) spans 67–76 (NSFSFNNVSS). A PAS 1 domain is found at 716 to 786 (PFPLLKVIID…NDWKSSLFSG (71 aa)). The PAC 1 domain occupies 789 to 841 (FYHEIRLQRFDNVYRYFICRAVPLRDCTGSVLHFFGTMTDVHDQKLAERELQK). One can recognise a PAS 2 domain in the interval 848 to 920 (NENSYRSLAE…ESLEGTFNNQ (73 aa)). The 54-residue stretch at 929–982 (FAAEIRFRSTDGHYRWHLVKSVCVNNSADTSTNLWLGTCTDIHDHKMLEEKLQE) folds into the PAC 2 domain. The region spanning 1000-1223 (NMSHEIRTPL…RFMWTATFTM (224 aa)) is the Histidine kinase domain. H1003 bears the Phosphohistidine; by autocatalysis mark. One can recognise a Response regulatory domain in the interval 1507-1629 (SVLLAEDNII…HLSLIISGIL (123 aa)). Residue D1559 is modified to 4-aspartylphosphate.

Its subcellular location is the cytoplasm. The enzyme catalyses ATP + protein L-histidine = ADP + protein N-phospho-L-histidine.. Involved in the control of the SAPK-dependent transcriptional response to peroxide stress. Also has a role in G2/M regulation. This is Peroxide stress-activated histidine kinase mak1 (mak1) from Schizosaccharomyces pombe (strain 972 / ATCC 24843) (Fission yeast).